Consider the following 22-residue polypeptide: Fuctinin-1 (22 aa).

Residues 1-22 form a disordered region; the sequence is SASPGLPKGEKEQQEAIEHIDE. The segment covering 8-22 has biased composition (basic and acidic residues); sequence KGEKEQQEAIEHIDE.

The protein to human SET/PHAPII protein. In terms of assembly, oligomer.

Its subcellular location is the cytoplasm. Has a role in the physiological regulation of fucosylation processes. In Rattus norvegicus (Rat), this protein is Fuctinin-1.